A 127-amino-acid polypeptide reads, in one-letter code: Aspartate 1-decarboxylase (127 aa).

The Schiff-base intermediate with substrate; via pyruvic acid role is filled by Ser-25. Ser-25 is subject to Pyruvic acid (Ser). Thr-57 contributes to the substrate binding site. The Proton donor role is filled by Tyr-58. Residue 73–75 (GAA) participates in substrate binding.

The protein belongs to the PanD family. Heterooctamer of four alpha and four beta subunits. Pyruvate is required as a cofactor. Is synthesized initially as an inactive proenzyme, which is activated by self-cleavage at a specific serine bond to produce a beta-subunit with a hydroxyl group at its C-terminus and an alpha-subunit with a pyruvoyl group at its N-terminus.

The protein localises to the cytoplasm. The catalysed reaction is L-aspartate + H(+) = beta-alanine + CO2. It participates in cofactor biosynthesis; (R)-pantothenate biosynthesis; beta-alanine from L-aspartate: step 1/1. Functionally, catalyzes the pyruvoyl-dependent decarboxylation of aspartate to produce beta-alanine. The protein is Aspartate 1-decarboxylase of Clostridium botulinum (strain Loch Maree / Type A3).